We begin with the raw amino-acid sequence, 226 residues long: PKHD-type hydroxylase PiuC (226 aa).

Residues 78–178 (KVFPPLFNCY…RYASFFWTQS (101 aa)) enclose the Fe2OG dioxygenase domain. Fe cation contacts are provided by histidine 96, aspartate 98, and histidine 159. Arginine 169 provides a ligand contact to 2-oxoglutarate.

The cofactor is Fe(2+). Requires L-ascorbate as cofactor.

The chain is PKHD-type hydroxylase PiuC (piuC) from Pseudomonas aeruginosa (strain ATCC 15692 / DSM 22644 / CIP 104116 / JCM 14847 / LMG 12228 / 1C / PRS 101 / PAO1).